A 154-amino-acid polypeptide reads, in one-letter code: Small ribosomal subunit protein uS15 (154 aa).

A compositionally biased stretch (basic residues) spans Met1–Arg14. The tract at residues Met1–Thr24 is disordered.

Belongs to the universal ribosomal protein uS15 family. In terms of assembly, part of the 30S ribosomal subunit.

In Pyrobaculum arsenaticum (strain DSM 13514 / JCM 11321 / PZ6), this protein is Small ribosomal subunit protein uS15.